Consider the following 361-residue polypeptide: G-protein coupled receptor 68 (361 aa).

Residues 1 to 12 (MGNITADNTSMN) lie on the Extracellular side of the membrane. N-linked (GlcNAc...) asparagine glycosylation is found at Asn-3 and Asn-8. The helical transmembrane segment at 13–49 (CDIDHTIHQTLAPVVYVMVLVVGFPANCLSLYYGYLQ) threads the bilayer. 2 disulfide bridges follow: Cys-13–Cys-258 and Cys-94–Cys-172. At 50–53 (IKAR) the chain is on the cytoplasmic side. Residues 54–84 (NELGVYLCNLTVADLFYICSLPFWLQYVLQH) traverse the membrane as a helical segment. Topologically, residues 85-89 (DHWSH) are extracellular. Residues 90 to 125 (DDLSCQVCGILLYENIYISVGFLCCISIDRYLAVAH) form a helical membrane-spanning segment. At 126-133 (PFRFHQFR) the chain is on the cytoplasmic side. Residues 134–160 (TLKAAMGVSALIWVKELLTSIYFLMHE) form a helical membrane-spanning segment. Topologically, residues 161–176 (EVVEDADRHRVCFEHY) are extracellular. The segment at 161–176 (EVVEDADRHRVCFEHY) is extracellular loop 2 (ECL2). The chain crosses the membrane as a helical span at residues 177–214 (PLEPRQRGINYYRFLVGFLFPICLLLASYRGILRAVRR). Residues 215–218 (SHGT) are Cytoplasmic-facing. Residues 219-254 (QKSRKDQIQRLVLSTVVIFLACFLPYHVLLLVRSLW) form a helical membrane-spanning segment. At 255 to 260 (ESSCDF) the chain is on the extracellular side. The chain crosses the membrane as a helical span at residues 261–289 (AKGIFNAYHFSLLLTSFNCVADPVLYCFV). At 290 to 361 (SETTHRDLAR…MGGSPAGGLS (72 aa)) the chain is on the cytoplasmic side. The segment at 340-361 (LHPAFQTPHPPGMGGSPAGGLS) is disordered. Positions 351-361 (GMGGSPAGGLS) are enriched in gly residues.

The protein belongs to the G-protein coupled receptor 1 family.

It localises to the cell membrane. With respect to regulation, activated by a network of residues that connects an extracellular-facing cavity to Glu-149, a conserved charged residue buried in the transmembrane core of the receptor. Protonation likely drives conformational changes in extracellular loop 2 (ECL2), which stabilizes movement of transmembrane 3 (TM3) and a series of rearrangements that connect the extracellular-facing cavity to Glu-149, a residue only conserved in proton-sensing G-protein coupled receptors. Activated in an allosteric manner by divalent metal ions at the extracellular surface following the order: Cd(2+) &gt; Co(2+) &gt; Ni(2+) &gt; Zn(2+) &gt; Fe(2+) &gt; Ca(2+) &gt; Mg(2+). Proton-sensing G-protein coupled receptor activated by extracellular pH, which is required to monitor pH changes and generate adaptive reactions. The receptor is almost silent at pH 7.8 but fully activated at pH 6.8. Ligand binding causes a conformation change that triggers signaling via guanine nucleotide-binding proteins (G proteins) and modulates the activity of downstream effectors, such as phospholipase C. GPR68 is mainly coupled to G(q) G proteins and mediates production of diacylglycerol (DAG) and inositol 1,4,5-trisphosphate (IP3). Acts as a key mechanosensor of fluid shear stress and membrane stretch. Expressed in endothelial cells of small-diameter resistance arteries, where it mediates flow-induced dilation in response to shear stress. May represents an osteoblastic pH sensor regulating cell-mediated responses to acidosis in bone. Acts as a regulator of calcium-sensing receptor CASR in a seesaw manner: GPR68-mediated signaling inhibits CASR signaling in response to protons, while CASR inhibits GPR68 in presence of extracellular calcium. This chain is G-protein coupled receptor 68 (GPR68), found in Bos taurus (Bovine).